A 101-amino-acid polypeptide reads, in one-letter code: uncharacterized protein (101 aa).

A signal peptide spans 1 to 24 (MILMFRMNKGMSFITLLFSLALFS).

This is an uncharacterized protein from Haemophilus influenzae (strain ATCC 51907 / DSM 11121 / KW20 / Rd).